The chain runs to 303 residues: Acetylglutamate kinase (303 aa).

Residues 69-70 (GG), R91, and N201 each bind substrate.

It belongs to the acetylglutamate kinase family. ArgB subfamily.

It localises to the cytoplasm. It catalyses the reaction N-acetyl-L-glutamate + ATP = N-acetyl-L-glutamyl 5-phosphate + ADP. It functions in the pathway amino-acid biosynthesis; L-arginine biosynthesis; N(2)-acetyl-L-ornithine from L-glutamate: step 2/4. Catalyzes the ATP-dependent phosphorylation of N-acetyl-L-glutamate. The sequence is that of Acetylglutamate kinase from Novosphingobium aromaticivorans (strain ATCC 700278 / DSM 12444 / CCUG 56034 / CIP 105152 / NBRC 16084 / F199).